A 253-amino-acid chain; its full sequence is Sulfate transporter CysZ (253 aa).

4 helical membrane-spanning segments follow: residues 31–51, 72–92, 151–171, and 222–242; these read FVIL…WWLF, LSYL…GYFF, IVLL…PVLW, and IPVL…AMWV.

The protein belongs to the CysZ family.

The protein localises to the cell inner membrane. Its function is as follows. High affinity, high specificity proton-dependent sulfate transporter, which mediates sulfate uptake. Provides the sulfur source for the cysteine synthesis pathway. This Salmonella paratyphi A (strain AKU_12601) protein is Sulfate transporter CysZ.